A 95-amino-acid polypeptide reads, in one-letter code: Defensin alpha 4 (95 aa).

The signal sequence occupies residues 1 to 19 (MRTLALLAAILLVALQAQA). The propeptide occupies 20 to 62 (EHISVSIDEVVDQQPPQAEDQDVAIYVKEHESSALEALGVKAG). 3 disulfide bridges follow: cysteine 65-cysteine 93, cysteine 67-cysteine 82, and cysteine 72-cysteine 92.

The protein belongs to the alpha-defensin family.

It is found in the secreted. In terms of biological role, host-defense peptide that has antimicrobial activity. Inhibits corticotropin (ACTH)-stimulated corticosterone production (in vitro). This Oryctolagus cuniculus (Rabbit) protein is Defensin alpha 4.